The primary structure comprises 94 residues: Co-chaperonin GroES (94 aa).

Belongs to the GroES chaperonin family. Heptamer of 7 subunits arranged in a ring. Interacts with the chaperonin GroEL.

It localises to the cytoplasm. Functionally, together with the chaperonin GroEL, plays an essential role in assisting protein folding. The GroEL-GroES system forms a nano-cage that allows encapsulation of the non-native substrate proteins and provides a physical environment optimized to promote and accelerate protein folding. GroES binds to the apical surface of the GroEL ring, thereby capping the opening of the GroEL channel. This is Co-chaperonin GroES from Staphylococcus aureus (strain Mu50 / ATCC 700699).